A 167-amino-acid chain; its full sequence is C-X-C motif chemokine 15 (167 aa).

The signal sequence occupies residues 1–25 (MAAQGWSMLLLAVLNLGIFVRPCDT). Disulfide bonds link Cys30–Cys57 and Cys32–Cys73. Ser157 is subject to Phosphoserine.

It belongs to the intercrine alpha (chemokine CxC) family. As to expression, expression restricted to the lung, produced by bronchoepithelial cells and is released into the airways. Expressed at low levels in fetal lung.

It localises to the secreted. Chemotactic for neutrophils. Involved in lung-specific neutrophil trafficking during normal and inflammatory conditions. The protein is C-X-C motif chemokine 15 (Cxcl15) of Mus musculus (Mouse).